The primary structure comprises 72 residues: Small ribosomal subunit protein bS18 (72 aa).

It belongs to the bacterial ribosomal protein bS18 family. As to quaternary structure, part of the 30S ribosomal subunit. Forms a tight heterodimer with protein bS6.

Binds as a heterodimer with protein bS6 to the central domain of the 16S rRNA, where it helps stabilize the platform of the 30S subunit. This Aquifex aeolicus (strain VF5) protein is Small ribosomal subunit protein bS18.